Consider the following 230-residue polypeptide: Ion-translocating oxidoreductase complex subunit E (230 aa).

6 consecutive transmembrane segments (helical) span residues 18-38 (ALVQ…ATNA), 39-59 (LGLG…ISTL), 63-83 (TPTE…VSAV), 86-106 (LINA…PLIV), 128-148 (ALDG…LGAM), and 182-202 (PFLL…MLAG).

The protein belongs to the NqrDE/RnfAE family. In terms of assembly, the complex is composed of six subunits: RsxA, RsxB, RsxC, RsxD, RsxE and RsxG.

The protein localises to the cell inner membrane. In terms of biological role, part of a membrane-bound complex that couples electron transfer with translocation of ions across the membrane. Required to maintain the reduced state of SoxR. The protein is Ion-translocating oxidoreductase complex subunit E of Escherichia fergusonii (strain ATCC 35469 / DSM 13698 / CCUG 18766 / IAM 14443 / JCM 21226 / LMG 7866 / NBRC 102419 / NCTC 12128 / CDC 0568-73).